The sequence spans 91 residues: Potassium channel toxin AaTXK-beta (91 aa).

Positions methionine 1–cysteine 19 are cleaved as a signal peptide. Residues glycine 20–glutamine 27 constitute a propeptide that is removed on maturation. Positions glutamine 54–phenylalanine 91 constitute a BetaSPN-type CS-alpha/beta domain. 3 cysteine pairs are disulfide-bonded: cysteine 57/cysteine 78, cysteine 64/cysteine 83, and cysteine 68/cysteine 85.

It belongs to the long chain scorpion toxin family. Class 1 subfamily. As to quaternary structure, monomer (both chains). In terms of tissue distribution, expressed by the venom gland.

The protein localises to the secreted. Functionally, inhibits voltage-gated potassium channels (Kv). Does not activate Kv7 channels. In terms of biological role, peptide activator of Kv7.4/KCNQ4 channels. Also acts as a subtype-selective activator of channels formed by Kv7.3/KCNQ3, Kv7.2/Kv7.3 (KCNQ2/KCNQ3), Kv7.5/Kv7.3 (KCNQ3/KCNQ5) subunits. The protein is Potassium channel toxin AaTXK-beta of Androctonus australis (Sahara scorpion).